We begin with the raw amino-acid sequence, 121 residues long: Acid shock protein (121 aa).

The signal sequence occupies residues 1–21; the sequence is MKKVLALMVAATLGLSSVAFA. A propeptide spanning residues 22-63 is cleaved from the precursor; sequence ADTTATATPAATSTTATVAAQTKATQHQKHKVTKKTTEQKAQ. The tract at residues 40 to 121 is disordered; it reads AAQTKATQHQ…AKKPVAAPAA (82 aa). Over residues 84–93 the composition is skewed to basic residues; sequence AAKKHVKKAS. Residues 94–103 are compositionally biased toward low complexity; the sequence is VQKAPVQKAQ. Positions 104 to 113 are enriched in basic residues; it reads AAKKHHKTAK.

The protein belongs to the Asr family. Post-translationally, proteolytic processing gives rise to the active protein.

The protein localises to the periplasm. Required for growth and/or survival at acidic conditions. This Yersinia pestis bv. Antiqua (strain Antiqua) protein is Acid shock protein.